The sequence spans 293 residues: Mitochondrial inner membrane protease atp23 (293 aa).

Positions 1–51 (MSPAPTTSAGPASSGIPPSSLPTSTVTEDDTKPSSSSSKANDLLPRYLTND) are disordered. Low complexity predominate over residues 8–22 (SAGPASSGIPPSSLP). A divalent metal cation is bound at residue histidine 190. Residue glutamate 191 is part of the active site. Histidine 194 is an a divalent metal cation binding site.

The protein belongs to the peptidase M76 family.

The protein localises to the mitochondrion inner membrane. Its function is as follows. Has a dual role in the assembly of mitochondrial ATPase. Acts as a protease that removes N-terminal residues of mitochondrial ATPase CF(0) subunit 6 at the intermembrane space side. Also involved in the correct assembly of the membrane-embedded ATPase CF(0) particle, probably mediating association of subunit 6 with the subunit 9 ring. The sequence is that of Mitochondrial inner membrane protease atp23 (atp23) from Neurospora crassa (strain ATCC 24698 / 74-OR23-1A / CBS 708.71 / DSM 1257 / FGSC 987).